A 449-amino-acid polypeptide reads, in one-letter code: Glucose-6-phosphate isomerase (449 aa).

Catalysis depends on glutamate 291, which acts as the Proton donor. Catalysis depends on residues histidine 312 and lysine 426.

It belongs to the GPI family.

It localises to the cytoplasm. It catalyses the reaction alpha-D-glucose 6-phosphate = beta-D-fructose 6-phosphate. Its pathway is carbohydrate biosynthesis; gluconeogenesis. It participates in carbohydrate degradation; glycolysis; D-glyceraldehyde 3-phosphate and glycerone phosphate from D-glucose: step 2/4. In terms of biological role, catalyzes the reversible isomerization of glucose-6-phosphate to fructose-6-phosphate. The sequence is that of Glucose-6-phosphate isomerase from Streptococcus pneumoniae (strain CGSP14).